We begin with the raw amino-acid sequence, 467 residues long: Argininosuccinate lyase (467 aa).

The protein belongs to the lyase 1 family. Argininosuccinate lyase subfamily.

It localises to the cytoplasm. It carries out the reaction 2-(N(omega)-L-arginino)succinate = fumarate + L-arginine. It functions in the pathway amino-acid biosynthesis; L-arginine biosynthesis; L-arginine from L-ornithine and carbamoyl phosphate: step 3/3. This chain is Argininosuccinate lyase, found in Anaeromyxobacter sp. (strain K).